The primary structure comprises 231 residues: MRIAVIGAMEEEVRILRDKLEQAETETVAGCEFTKGQLAGHEVILLKSGIGKVNAAMSTTILLEKYKPEKVINTGSAGGFHHSLNVGDVVISTEVRHHDVDVTAFNYEYGQVPGMPPGFKADEALVALAEKCMQAEENIQVVKGMIATGDSFMSDPNRVAAIRDKFENLYAVEMEAAAVAQVCHQYEVPFVIIRALSDIAGKESNVSFDQFLDQAALHSTNFIVKVLEELK.

The Proton acceptor role is filled by Glu12. Substrate-binding positions include Gly78, Met153, and 174–175; that span reads ME. Asp198 acts as the Proton donor in catalysis.

Belongs to the PNP/UDP phosphorylase family. MtnN subfamily.

The enzyme catalyses S-adenosyl-L-homocysteine + H2O = S-(5-deoxy-D-ribos-5-yl)-L-homocysteine + adenine. It carries out the reaction S-methyl-5'-thioadenosine + H2O = 5-(methylsulfanyl)-D-ribose + adenine. The catalysed reaction is 5'-deoxyadenosine + H2O = 5-deoxy-D-ribose + adenine. It functions in the pathway amino-acid biosynthesis; L-methionine biosynthesis via salvage pathway; S-methyl-5-thio-alpha-D-ribose 1-phosphate from S-methyl-5'-thioadenosine (hydrolase route): step 1/2. Functionally, catalyzes the irreversible cleavage of the glycosidic bond in both 5'-methylthioadenosine (MTA) and S-adenosylhomocysteine (SAH/AdoHcy) to adenine and the corresponding thioribose, 5'-methylthioribose and S-ribosylhomocysteine, respectively. Also cleaves 5'-deoxyadenosine, a toxic by-product of radical S-adenosylmethionine (SAM) enzymes, into 5-deoxyribose and adenine. This Bacillus thuringiensis subsp. konkukian (strain 97-27) protein is 5'-methylthioadenosine/S-adenosylhomocysteine nucleosidase.